We begin with the raw amino-acid sequence, 117 residues long: MDCTWRILLLVAAATGTHAEVQLVQSGAEVKKPGATVKISCKVSGYTFTDYYMHWVQQAPGKGLEWMGLVDPEDGETIYAEKFQGRVTITADTSTDTAYMELSSLRSEDTAVYYCAT.

A signal peptide spans 1 to 19; that stretch reads MDCTWRILLLVAAATGTHA. The interval 20 to 44 is framework-1; sequence EVQLVQSGAEVKKPGATVKISCKVS. The Ig-like domain maps to 20–117; it reads EVQLVQSGAE…EDTAVYYCAT (98 aa). Cysteines 41 and 115 form a disulfide. Positions 45 to 52 are complementarity-determining-1; sequence GYTFTDYY. Residues 53 to 69 form a framework-2 region; the sequence is MHWVQQAPGKGLEWMGL. The interval 70-77 is complementarity-determining-2; it reads VDPEDGET. Residues 78 to 115 form a framework-3 region; sequence IYAEKFQGRVTITADTSTDTAYMELSSLRSEDTAVYYC. Positions 116-117 are complementarity-determining-3; the sequence is AT.

As to quaternary structure, immunoglobulins are composed of two identical heavy chains and two identical light chains; disulfide-linked.

The protein localises to the secreted. It is found in the cell membrane. V region of the variable domain of immunoglobulin heavy chains that participates in the antigen recognition. Immunoglobulins, also known as antibodies, are membrane-bound or secreted glycoproteins produced by B lymphocytes. In the recognition phase of humoral immunity, the membrane-bound immunoglobulins serve as receptors which, upon binding of a specific antigen, trigger the clonal expansion and differentiation of B lymphocytes into immunoglobulins-secreting plasma cells. Secreted immunoglobulins mediate the effector phase of humoral immunity, which results in the elimination of bound antigens. The antigen binding site is formed by the variable domain of one heavy chain, together with that of its associated light chain. Thus, each immunoglobulin has two antigen binding sites with remarkable affinity for a particular antigen. The variable domains are assembled by a process called V-(D)-J rearrangement and can then be subjected to somatic hypermutations which, after exposure to antigen and selection, allow affinity maturation for a particular antigen. The chain is Immunoglobulin heavy variable 1-69-2 from Homo sapiens (Human).